The following is a 97-amino-acid chain: Co-chaperonin GroES (97 aa).

Belongs to the GroES chaperonin family. Heptamer of 7 subunits arranged in a ring. Interacts with the chaperonin GroEL.

It is found in the cytoplasm. In terms of biological role, together with the chaperonin GroEL, plays an essential role in assisting protein folding. The GroEL-GroES system forms a nano-cage that allows encapsulation of the non-native substrate proteins and provides a physical environment optimized to promote and accelerate protein folding. GroES binds to the apical surface of the GroEL ring, thereby capping the opening of the GroEL channel. This chain is Co-chaperonin GroES, found in Enterobacter sp. (strain 638).